Consider the following 316-residue polypeptide: ATP synthase gamma chain (316 aa).

The protein belongs to the ATPase gamma chain family. As to quaternary structure, F-type ATPases have 2 components, CF(1) - the catalytic core - and CF(0) - the membrane proton channel. CF(1) has five subunits: alpha(3), beta(3), gamma(1), delta(1), epsilon(1). CF(0) has three main subunits: a, b and c.

It localises to the cellular thylakoid membrane. Its function is as follows. Produces ATP from ADP in the presence of a proton gradient across the membrane. The gamma chain is believed to be important in regulating ATPase activity and the flow of protons through the CF(0) complex. The sequence is that of ATP synthase gamma chain from Prochlorococcus marinus (strain NATL2A).